Reading from the N-terminus, the 118-residue chain is Large ribosomal subunit protein bL19 (118 aa).

This sequence belongs to the bacterial ribosomal protein bL19 family.

Its function is as follows. This protein is located at the 30S-50S ribosomal subunit interface and may play a role in the structure and function of the aminoacyl-tRNA binding site. The chain is Large ribosomal subunit protein bL19 from Buchnera aphidicola subsp. Baizongia pistaciae (strain Bp).